Here is a 250-residue protein sequence, read N- to C-terminus: 7-cyano-7-deazaguanine synthase (250 aa).

21-31 (FSGGQDSSVCL) serves as a coordination point for ATP. Zn(2+) is bound by residues Cys-209, Cys-224, Cys-227, and Cys-230.

Belongs to the QueC family. The cofactor is Zn(2+).

It catalyses the reaction 7-carboxy-7-deazaguanine + NH4(+) + ATP = 7-cyano-7-deazaguanine + ADP + phosphate + H2O + H(+). The protein operates within purine metabolism; 7-cyano-7-deazaguanine biosynthesis. Functionally, catalyzes the ATP-dependent conversion of 7-carboxy-7-deazaguanine (CDG) to 7-cyano-7-deazaguanine (preQ(0)). This is 7-cyano-7-deazaguanine synthase from Caulobacter sp. (strain K31).